Here is a 1072-residue protein sequence, read N- to C-terminus: Carbamoyl phosphate synthase large chain (1072 aa).

A carboxyphosphate synthetic domain region spans residues 1–401 (MPKYKDISKV…SLLKAVRSLE (401 aa)). Residues Arg-129, Arg-169, Gly-175, Gly-176, Lys-208, Leu-210, Glu-215, Gly-241, Val-242, His-243, Gln-284, and Glu-298 each contribute to the ATP site. The 195-residue stretch at 133–327 (KRKMQEIGEP…IAKIAAKIAI (195 aa)) folds into the ATP-grasp 1 domain. Residues Gln-284, Glu-298, and Asn-300 each coordinate Mg(2+). Positions 284, 298, and 300 each coordinate Mn(2+). The oligomerization domain stretch occupies residues 402-544 (IKAYGLRLDS…YIYSTYCEED (143 aa)). The carbamoyl phosphate synthetic domain stretch occupies residues 545 to 929 (EVETHDIPKV…ALYKALEGAG (385 aa)). The 191-residue stretch at 671-861 (SKLLKELNIN…MVKLAVEVAL (191 aa)) folds into the ATP-grasp 2 domain. ATP-binding residues include Arg-707, Lys-746, Ile-748, Glu-752, Gly-777, Val-778, His-779, Ser-780, Gln-820, and Glu-832. Positions 820, 832, and 834 each coordinate Mg(2+). Mn(2+) is bound by residues Gln-820, Glu-832, and Asn-834. In terms of domain architecture, MGS-like spans 930-1072 (LKIPKKGKIL…QKDNVKNLVL (143 aa)). The allosteric domain stretch occupies residues 930 to 1072 (LKIPKKGKIL…QKDNVKNLVL (143 aa)).

The protein belongs to the CarB family. In terms of assembly, composed of two chains; the small (or glutamine) chain promotes the hydrolysis of glutamine to ammonia, which is used by the large (or ammonia) chain to synthesize carbamoyl phosphate. Tetramer of heterodimers (alpha,beta)4. Requires Mg(2+) as cofactor. Mn(2+) is required as a cofactor.

The enzyme catalyses hydrogencarbonate + L-glutamine + 2 ATP + H2O = carbamoyl phosphate + L-glutamate + 2 ADP + phosphate + 2 H(+). The catalysed reaction is hydrogencarbonate + NH4(+) + 2 ATP = carbamoyl phosphate + 2 ADP + phosphate + 2 H(+). It functions in the pathway amino-acid biosynthesis; L-arginine biosynthesis; carbamoyl phosphate from bicarbonate: step 1/1. It participates in pyrimidine metabolism; UMP biosynthesis via de novo pathway; (S)-dihydroorotate from bicarbonate: step 1/3. Large subunit of the glutamine-dependent carbamoyl phosphate synthetase (CPSase). CPSase catalyzes the formation of carbamoyl phosphate from the ammonia moiety of glutamine, carbonate, and phosphate donated by ATP, constituting the first step of 2 biosynthetic pathways, one leading to arginine and/or urea and the other to pyrimidine nucleotides. The large subunit (synthetase) binds the substrates ammonia (free or transferred from glutamine from the small subunit), hydrogencarbonate and ATP and carries out an ATP-coupled ligase reaction, activating hydrogencarbonate by forming carboxy phosphate which reacts with ammonia to form carbamoyl phosphate. The polypeptide is Carbamoyl phosphate synthase large chain (Caldanaerobacter subterraneus subsp. tengcongensis (strain DSM 15242 / JCM 11007 / NBRC 100824 / MB4) (Thermoanaerobacter tengcongensis)).